The primary structure comprises 642 residues: MSLSKLDSEKLTIEDVQTSSSSCRREINTTTYDDYILSIQTSEKQNQEHFVLTFPKTPMPDKKKRSGPSELEVAVPIQVKRKIEKDQKPTHVWINQFLRDIFLKSSFSRPFITQAPFKYLYNPQNHYTMAESRKSKNDERRKTLKIKFRGKISSCVVNLEPMRTITNGEPEILGNTEKNPSKSSHKIKLPKTSNSTSETNLEYNNSKKTLEMSLRNGNKNSMNFVLKGNAATCCKDNPNTDSKKSVEEFSDDISECINSSNMDLMLRLNEFRAEFTDLDVWSTNCSQNNAKKPLKTGGKKERDSDIDSGGSKDAKKEGKKKGKRESRKKRNTESSDAESGDSKDGKKKSKHDKKNEIKKKKDTDSTGSGSGASMVSKKGKTEKKSTGKKSTGSTGSESVDSKSTNKVKKQVKKGVMKKAVSTDSESDASSKKSKKDEKKENKGRKKKPIKDTESTDADSESEGDSTGKKNEKKDKKITKKGEKKDAKKNTASSESESDLGVNKKKTKIKEIVSFSDSTSDSYSKAGRRKNVRRSDSESEDSSGFRVLKSTDDSEASSTDSKTGMPGMRRGFRSLSKKTTFNERGKRSVTGRIPSSRERLPFPPCEPFRASPKPVHVCKCKESPSPKARYAPLPGVEWIHKLL.

Disordered regions lie at residues N167 to Y203 and N284 to F607. Positions K191–Y203 are enriched in polar residues. 8 consecutive repeat copies span residues L294 to D313, A314 to D344, G345 to T391, G392 to K432, S433 to D464, S465 to G500, V501 to G526, and R527 to G543. Over residues G298 to K316 the composition is skewed to basic and acidic residues. Over residues E317–R330 the composition is skewed to basic residues. Residues K353–D364 are compositionally biased toward basic and acidic residues. Residues K388 to T404 are compositionally biased toward low complexity. Residues N405 to M416 show a composition bias toward basic residues. Over residues A428–E440 the composition is skewed to basic and acidic residues. Residues S454–G463 show a composition bias toward acidic residues. The segment covering S465 to K488 has biased composition (basic and acidic residues). Low complexity predominate over residues S513 to S523. The interval R527–G543 is 8 X approximate tandem repeats.

Interacts with proteins of spermatozoa head including ACTL7A, CCIN, FAM209 and SPACA1; the interactions may be necessary for proper acrosome attachment to the nuclear envelope. Testis.

The protein resides in the cytoplasm. The protein localises to the cytoskeleton. It localises to the perinuclear theca. It is found in the calyx. Functionally, plays a role in the establishment of normal sperm morphology during spermatogenesis and is required for acrosome attachment to the nuclear envelope. The protein is Cylicin-1 of Mus musculus (Mouse).